A 409-amino-acid chain; its full sequence is Elongation factor Tu, chloroplastic (409 aa).

Residues 10–214 enclose the tr-type G domain; sequence KPHVNIGTIG…KIDEYIPTPE (205 aa). The interval 19–26 is G1; that stretch reads GHVDHGKT. 19-26 is a GTP binding site; it reads GHVDHGKT. T26 lines the Mg(2+) pocket. A G2 region spans residues 60–64; sequence GITIN. The interval 81–84 is G3; sequence DCPG. GTP-binding positions include 81-85 and 136-139; these read DCPGH and NKAD. Residues 136 to 139 are G4; the sequence is NKAD. The segment at 174–176 is G5; that stretch reads SAL.

This sequence belongs to the TRAFAC class translation factor GTPase superfamily. Classic translation factor GTPase family. EF-Tu/EF-1A subfamily.

The protein localises to the plastid. The protein resides in the chloroplast. The catalysed reaction is GTP + H2O = GDP + phosphate + H(+). Its function is as follows. GTP hydrolase that promotes the GTP-dependent binding of aminoacyl-tRNA to the A-site of ribosomes during protein biosynthesis. The chain is Elongation factor Tu, chloroplastic (tufA) from Rhodomonas salina (Cryptomonas salina).